A 64-amino-acid polypeptide reads, in one-letter code: Beta-defensin 5 (64 aa).

The signal sequence occupies residues 1–22 (MRLHHLLLVLLFLVLSAGSGFT). Pyrrolidone carboxylic acid is present on glutamine 23. Cystine bridges form between cysteine 31–cysteine 60, cysteine 38–cysteine 53, and cysteine 43–cysteine 61.

Belongs to the beta-defensin family. In terms of tissue distribution, neutrophilic granules. Alveolar macrophages.

Its subcellular location is the secreted. Has bactericidal activity. Active against E.coli ML35 but not against S.aureus 502A. This is Beta-defensin 5 (DEFB5) from Bos taurus (Bovine).